Here is a 222-residue protein sequence, read N- to C-terminus: UPF0502 protein PBPRB0676 (222 aa).

Belongs to the UPF0502 family.

The sequence is that of UPF0502 protein PBPRB0676 from Photobacterium profundum (strain SS9).